The sequence spans 373 residues: Opsin Rh1 (373 aa).

Topologically, residues 1-49 are extracellular; it reads MESFAVAAAQLGPHFAPLSNGSVVDKVTPDMAHLISPYWNQFPAMDPIW. An N-linked (GlcNAc...) asparagine glycan is attached at N20. The chain crosses the membrane as a helical span at residues 50–74; it reads AKILTAYMIMIGMISWCGNGVVIYI. Over 75-86 the chain is Cytoplasmic; that stretch reads FATTKSLRTPAN. The chain crosses the membrane as a helical span at residues 87-112; that stretch reads LLVINLAISDFGIMITNTPMMGINLY. At 113–126 the chain is on the extracellular side; that stretch reads FETWVLGPMMCDIY. C123 and C200 are oxidised to a cystine. The chain crosses the membrane as a helical span at residues 127 to 146; the sequence is AGLGSAFGCSSIWSMCMISL. Residues 147–165 lie on the Cytoplasmic side of the membrane; it reads DRYQVIVKGMAGRPMTIPL. Residues 166–189 form a helical membrane-spanning segment; it reads ALGKIAYIWFMSSIWCLAPAFGWS. Over 190 to 213 the chain is Extracellular; the sequence is RYVPEGNLTSCGIDYLERDWNPRS. Residue N196 is glycosylated (N-linked (GlcNAc...) asparagine). Residues 214–241 form a helical membrane-spanning segment; that stretch reads YLIFYSIFVYYIPLFLICYSYWFIIAAV. Topologically, residues 242–276 are cytoplasmic; it reads SAHEKAMREQAKKMNVKSLRSSEDAEKSAEGKLAK. Residues 277-300 traverse the membrane as a helical segment; sequence VALVTITLWFMAWTPYLVINCMGL. The Extracellular segment spans residues 301 to 307; it reads FKFEGLT. The helical transmembrane segment at 308–332 threads the bilayer; sequence PLNTIWGACFAKSAACYNPIVYGIS. K319 is subject to N6-(retinylidene)lysine. The Cytoplasmic segment spans residues 333 to 373; it reads HPKYRLALKEKCPCCVFGKVDDGKSSDAQSQATASEAESKA. The interval 354 to 373 is disordered; the sequence is DGKSSDAQSQATASEAESKA. A compositionally biased stretch (low complexity) spans 358–373; it reads SDAQSQATASEAESKA.

It belongs to the G-protein coupled receptor 1 family. Opsin subfamily. In terms of processing, phosphorylated on some or all of the serine and threonine residues present in the C-terminal region.

Its subcellular location is the cell projection. The protein resides in the rhabdomere membrane. In terms of biological role, visual pigments are the light-absorbing molecules that mediate vision. They consist of an apoprotein, opsin, covalently linked to cis-retinal. In Drosophila melanogaster (Fruit fly), this protein is Opsin Rh1 (ninaE).